The sequence spans 74 residues: Conotoxin Vi15a (74 aa).

The first 19 residues, 1-19 (MMPVILLLLLSLAIRCADG), serve as a signal peptide directing secretion. The propeptide occupies 20 to 43 (KAVQGDSDPSASLLTGDKNHDLPV). W72 carries the tryptophan amide modification.

Contains four disulfide bonds. Expressed by the venom duct.

The protein resides in the secreted. The chain is Conotoxin Vi15a from Conus virgo (Virgin cone).